The primary structure comprises 325 residues: Formimidoylglutamase (325 aa).

6 residues coordinate Mn(2+): His125, Asp155, His157, Asp159, Cys246, and Asp248.

This sequence belongs to the arginase family. Requires Mn(2+) as cofactor.

The enzyme catalyses N-formimidoyl-L-glutamate + H2O = formamide + L-glutamate. Its pathway is amino-acid degradation; L-histidine degradation into L-glutamate; L-glutamate from N-formimidoyl-L-glutamate (hydrolase route): step 1/1. Catalyzes the conversion of N-formimidoyl-L-glutamate to L-glutamate and formamide. This chain is Formimidoylglutamase, found in Ralstonia nicotianae (strain ATCC BAA-1114 / GMI1000) (Ralstonia solanacearum).